A 75-amino-acid chain; its full sequence is MGELVKTIAKALVDNPDAVEVNEIHGHQSIIIELKVAPEDMGKVIGKQGRIAQAIRTLVKAAALKEKKRVIVEII.

In terms of domain architecture, KH spans 29–75 (SIIIELKVAPEDMGKVIGKQGRIAQAIRTLVKAAALKEKKRVIVEII).

It belongs to the KhpA RNA-binding protein family. In terms of assembly, forms a complex with KhpB.

It is found in the cytoplasm. Its function is as follows. A probable RNA chaperone. Forms a complex with KhpB which binds to cellular RNA and controls its expression. Plays a role in peptidoglycan (PG) homeostasis and cell length regulation. The chain is RNA-binding protein KhpA from Caldanaerobacter subterraneus subsp. tengcongensis (strain DSM 15242 / JCM 11007 / NBRC 100824 / MB4) (Thermoanaerobacter tengcongensis).